A 31-amino-acid chain; its full sequence is MSDIN-like toxin proprotein 4 (31 aa).

Positions 1–10 are excised as a propeptide; sequence MSDINGTRLP. The cyclopeptide (Trp-Pro) cross-link spans 11–16; the sequence is WLATCP. The propeptide occupies 17–31; the sequence is CVGEDVNPTLSRGER.

It belongs to the MSDIN fungal toxin family. Processed by the macrocyclase-peptidase enzyme POPB to yield a toxic cyclic hexapeptide. POPB first removes 10 residues from the N-terminus. Conformational trapping of the remaining peptide forces the enzyme to release this intermediate rather than proceed to macrocyclization. The enzyme rebinds the remaining peptide in a different conformation and catalyzes macrocyclization of the N-terminal 6 residues.

Its function is as follows. Probable toxin that belongs to the MSDIN-like toxin family responsible for a large number of food poisoning cases and deaths. This chain is MSDIN-like toxin proprotein 4, found in Amanita phalloides (Death cap).